Consider the following 132-residue polypeptide: UPF0292 protein PYRAB04740 (132 aa).

Residues 20 to 100 (DGAIIVEGPR…KVDTETRRSL (81 aa)) enclose the Toprim domain. 3 residues coordinate Mg(2+): Glu26, Asp69, and Asp71.

It belongs to the UPF0292 family. The cofactor is Mg(2+).

In Pyrococcus abyssi (strain GE5 / Orsay), this protein is UPF0292 protein PYRAB04740.